Reading from the N-terminus, the 274-residue chain is MFTDKETHRKPFPTWAHLLHSEPSKQFVFGNWKMNKTLTEAQTFLKSFISSDILSNPQIITGIIPPFTLLSACQQAVSDSPIFLGAQTTHEADSGAFTGEISAPMLKDIGVDFVLIGHSERRHIFHEQNPVLAEKAAAAIHSGMIPVLCIGETLEEQESGATQDILLNQLTIGLSKLPEQASFILAYEPVWAIGTGKVAHPDLVQETHAFCRKTIASLFSKDIAERTPILYGGSVKADDARSLSLCPDVNGLLVGGASLSSENFLSIIQQVDIP.

Residue Asn-31–Lys-33 participates in substrate binding. His-118 serves as the catalytic Electrophile. The Proton acceptor role is filled by Glu-188. Residues Gly-194, Ser-234, and Gly-255 to Gly-256 contribute to the substrate site.

This sequence belongs to the triosephosphate isomerase family. In terms of assembly, homodimer.

It is found in the cytoplasm. The enzyme catalyses D-glyceraldehyde 3-phosphate = dihydroxyacetone phosphate. It participates in carbohydrate biosynthesis; gluconeogenesis. It functions in the pathway carbohydrate degradation; glycolysis; D-glyceraldehyde 3-phosphate from glycerone phosphate: step 1/1. Functionally, involved in the gluconeogenesis. Catalyzes stereospecifically the conversion of dihydroxyacetone phosphate (DHAP) to D-glyceraldehyde-3-phosphate (G3P). The sequence is that of Triosephosphate isomerase from Chlamydia trachomatis serovar A (strain ATCC VR-571B / DSM 19440 / HAR-13).